Reading from the N-terminus, the 266-residue chain is 3-methyl-2-oxobutanoate hydroxymethyltransferase 2 (266 aa).

Mg(2+) contacts are provided by D45 and D84. Residues 45–46 (DS), D84, and K112 each bind 3-methyl-2-oxobutanoate. Position 114 (E114) interacts with Mg(2+). E181 serves as the catalytic Proton acceptor.

The protein belongs to the PanB family. In terms of assembly, homodecamer; pentamer of dimers. The cofactor is Mg(2+).

The protein localises to the cytoplasm. It catalyses the reaction 3-methyl-2-oxobutanoate + (6R)-5,10-methylene-5,6,7,8-tetrahydrofolate + H2O = 2-dehydropantoate + (6S)-5,6,7,8-tetrahydrofolate. The protein operates within cofactor biosynthesis; (R)-pantothenate biosynthesis; (R)-pantoate from 3-methyl-2-oxobutanoate: step 1/2. In terms of biological role, catalyzes the reversible reaction in which hydroxymethyl group from 5,10-methylenetetrahydrofolate is transferred onto alpha-ketoisovalerate to form ketopantoate. This Pseudomonas entomophila (strain L48) protein is 3-methyl-2-oxobutanoate hydroxymethyltransferase 2.